We begin with the raw amino-acid sequence, 181 residues long: CDP-diacylglycerol--glycerol-3-phosphate 3-phosphatidyltransferase (181 aa).

4 helical membrane passes run 8 to 28 (PNYL…AFYI), 35 to 55 (KLGA…GYIA), 64 to 84 (FGKM…IIML), and 148 to 168 (IIYL…LTII).

This sequence belongs to the CDP-alcohol phosphatidyltransferase class-I family.

It localises to the cell membrane. It carries out the reaction a CDP-1,2-diacyl-sn-glycerol + sn-glycerol 3-phosphate = a 1,2-diacyl-sn-glycero-3-phospho-(1'-sn-glycero-3'-phosphate) + CMP + H(+). The protein operates within phospholipid metabolism; phosphatidylglycerol biosynthesis; phosphatidylglycerol from CDP-diacylglycerol: step 1/2. Its function is as follows. This protein catalyzes the committed step to the synthesis of the acidic phospholipids. This Rickettsia felis (strain ATCC VR-1525 / URRWXCal2) (Rickettsia azadi) protein is CDP-diacylglycerol--glycerol-3-phosphate 3-phosphatidyltransferase (pgsA).